The primary structure comprises 105 residues: 3-phenylpropionate/cinnamic acid dioxygenase ferredoxin subunit (105 aa).

The 96-residue stretch at 4-99 (LFVCTVEELP…VVVKDGNIYI (96 aa)) folds into the Rieske domain. [2Fe-2S] cluster-binding residues include C42, H44, C62, and H65.

Belongs to the bacterial ring-hydroxylating dioxygenase ferredoxin component family. In terms of assembly, this dioxygenase system consists of four proteins: the two subunits of the hydroxylase component (HcaE and HcaF), a ferredoxin (HcaC) and a ferredoxin reductase (HcaD). Requires [2Fe-2S] cluster as cofactor.

It functions in the pathway aromatic compound metabolism; 3-phenylpropanoate degradation. In terms of biological role, part of the multicomponent 3-phenylpropionate dioxygenase, that converts 3-phenylpropionic acid (PP) and cinnamic acid (CI) into 3-phenylpropionate-dihydrodiol (PP-dihydrodiol) and cinnamic acid-dihydrodiol (CI-dihydrodiol), respectively. This protein seems to be a 2Fe-2S ferredoxin. In Photorhabdus laumondii subsp. laumondii (strain DSM 15139 / CIP 105565 / TT01) (Photorhabdus luminescens subsp. laumondii), this protein is 3-phenylpropionate/cinnamic acid dioxygenase ferredoxin subunit.